Here is a 475-residue protein sequence, read N- to C-terminus: Ubiquitin carboxyl-terminal hydrolase calypso (475 aa).

A UCH catalytic domain is found at 44 to 275 (GWLELESDPG…IRFNLMAVVP (232 aa)). The active-site Nucleophile is cysteine 130. The Proton donor role is filled by histidine 212. A coiled-coil region spans residues 333 to 360 (AKDLQLLLKNLDTEIAINEQNLADENDR). The region spanning 374 to 402 (NYDKFICTFLSMLAHQGVLGELVSQHLLP) is the ULD domain. The segment at 404–475 (KKVSGQSAAN…KGRNKCRKRK (72 aa)) is positively charged C-terminal tail required for binding nucleosomes. The segment at 411–475 (AANRISKQNS…KGRNKCRKRK (65 aa)) is disordered. A compositionally biased stretch (low complexity) spans 419–460 (NSAASSAGANAGAAAGVTPKSQQQQQQPQTAASKNGKSPGKT). A compositionally biased stretch (basic residues) spans 461-475 (PGRRRKGRNKCRKRK).

The protein belongs to the peptidase C12 family. BAP1 subfamily. In terms of assembly, catalytic component of the polycomb repressive deubiquitinase (PR-DUB) complex, at least composed of caly/calypso, Asx and sba (MBD5/6 homolog). The PR-DUB complex associates with nucleosomes to mediate deubiquitination of histone H2AK118ub1 substrates; the association requires the positively charged C-terminal tail of caly, probably due to direct binding of DNA. Interacts (via ULD domain) with Asx (via DEUBAD domain); the interaction produces a stable heterodimer with a composite binding site for ubiquitin. Homodimerizes (via coiled-coil hinge-region between the UCH and ULD domains) to mediate assembly of 2 copies of the caly-Asx heterodimer into a bisymmetric tetramer; dimerization enhances PR-DUB association with nucleosomes.

The protein localises to the nucleus. The enzyme catalyses Thiol-dependent hydrolysis of ester, thioester, amide, peptide and isopeptide bonds formed by the C-terminal Gly of ubiquitin (a 76-residue protein attached to proteins as an intracellular targeting signal).. Its function is as follows. Catalytic component of the polycomb repressive deubiquitinase (PR-DUB) complex, a complex that specifically mediates deubiquitination of histone H2A monoubiquitinated at 'Lys-119' (H2AK118ub1). Mediates bisymmetric organization of the PR-DUB complex and is involved in association with nucleosomes to mediate deubiquitination. Does not deubiquitinate monoubiquitinated histone H2B. Required to maintain the transcriptionally repressive state of homeotic genes throughout development. The PR-DUB complex has weak or no activity toward 'Lys-48'- and 'Lys-63'-linked polyubiquitin chains. Polycomb group (PcG) protein. The polypeptide is Ubiquitin carboxyl-terminal hydrolase calypso (Drosophila persimilis (Fruit fly)).